We begin with the raw amino-acid sequence, 153 residues long: Ribosome maturation factor RimP (153 aa).

This sequence belongs to the RimP family.

The protein resides in the cytoplasm. In terms of biological role, required for maturation of 30S ribosomal subunits. This chain is Ribosome maturation factor RimP, found in Clostridium tetani (strain Massachusetts / E88).